A 1377-amino-acid polypeptide reads, in one-letter code: DNA-directed RNA polymerase subunit beta' (1377 aa).

Zn(2+) is bound by residues C60, C62, C75, and C78. Residues D449, D451, and D453 each coordinate Mg(2+). Zn(2+) is bound by residues C777, C851, C858, and C861.

The protein belongs to the RNA polymerase beta' chain family. In terms of assembly, the RNAP catalytic core consists of 2 alpha, 1 beta, 1 beta' and 1 omega subunit. When a sigma factor is associated with the core the holoenzyme is formed, which can initiate transcription. Requires Mg(2+) as cofactor. It depends on Zn(2+) as a cofactor.

It catalyses the reaction RNA(n) + a ribonucleoside 5'-triphosphate = RNA(n+1) + diphosphate. DNA-dependent RNA polymerase catalyzes the transcription of DNA into RNA using the four ribonucleoside triphosphates as substrates. This is DNA-directed RNA polymerase subunit beta' from Borreliella burgdorferi (strain ATCC 35210 / DSM 4680 / CIP 102532 / B31) (Borrelia burgdorferi).